The following is a 701-amino-acid chain: Elongation factor G 1 (701 aa).

The tr-type G domain occupies 8–290 (ERYRNIGISA…AVIDYLPSPL (283 aa)). Residues 17-24 (AHIDAGKT), 88-92 (DTPGH), and 142-145 (NKMD) contribute to the GTP site.

It belongs to the TRAFAC class translation factor GTPase superfamily. Classic translation factor GTPase family. EF-G/EF-2 subfamily.

The protein localises to the cytoplasm. Its function is as follows. Catalyzes the GTP-dependent ribosomal translocation step during translation elongation. During this step, the ribosome changes from the pre-translocational (PRE) to the post-translocational (POST) state as the newly formed A-site-bound peptidyl-tRNA and P-site-bound deacylated tRNA move to the P and E sites, respectively. Catalyzes the coordinated movement of the two tRNA molecules, the mRNA and conformational changes in the ribosome. The protein is Elongation factor G 1 of Paraburkholderia xenovorans (strain LB400).